We begin with the raw amino-acid sequence, 396 residues long: Histidine-rich glycoprotein (396 aa).

2 consecutive Cystatin domains span residues 1–102 and 103–169; these read AVNP…SALT and NMRA…RFSA. Intrachain disulfides connect Cys-7–Cys-375, Cys-56–Cys-67, Cys-77–Cys-92, Cys-123–Cys-297, Cys-137–Cys-160, and Cys-212–Cys-242. Residue Asn-70 is glycosylated (N-linked (GlcNAc...) asparagine; partial). 2 N-linked (GlcNAc...) asparagine glycosylation sites follow: Asn-91 and Asn-122. The disordered stretch occupies residues 176-322; it reads RPFHSGEHEH…GPGKGHFRFH (147 aa). Residues 197–208 show a composition bias toward basic and acidic residues; that stretch reads GSKDHGHPHESY. Asn-220 is a glycosylation site (N-linked (GlcNAc...) asparagine). Residues 233 to 246 show a composition bias toward pro residues; the sequence is LPFPPPGLRCPHPP. Residues 255-265 are compositionally biased toward basic and acidic residues; that stretch reads PPHDHSSDEHH. The segment covering 266 to 284 has biased composition (basic residues); sequence PHGHHPHGHHPHGHHPHGH. Residues 285–296 are compositionally biased toward basic and acidic residues; that stretch reads HPPDNDFYDHGP. The span at 304-322 shows a compositional bias: basic residues; sequence PPPRHSKERGPGKGHFRFH. The residue at position 309 (Ser-309) is a Phosphoserine.

In terms of assembly, interacts (via the HRR domain) with TPM1; the interaction appears to contribute to the antiangiogenic properties of the HRR domain. Interacts with THBS1 (via the TSP type I repeats); the interaction blocks the antiangiogenic effect of THBS1 with CD36. Interacts with PLG (via its Kringle domains); the interaction tethers PLG to the cell surface and enhances its activation. Interacts with THBS2; the interaction blocks the antiangiogenic effect of THBS2 with CD36. Interacts with HPSE; the interaction is enhanced at acidic pH, partially inhibits binding of HPSE to cell surface receptors and modulates its enzymatic activity. Interacts (via the HRR domain) with TMP1; the interaction partially mediates the antiangiogenic properties of HRG. Interacts with kappa and lambda light chains of IgG molecules. Interacts with ATP5F1A; the interaction occurs on the surface of T-cells and alters their cell morphology in concert with CONA. Binds IgG molecules containing kappa and lambda light chains and inhibits the formation of insoluble immunoglobulin complexes. Interacts with F12; the interaction, which is enhanced in the presence of zinc ions and inhibited by heparin-binding to HRG, inhibits factor XII autoactivation and contact-initiated coagulation. N-glycosylated. In terms of processing, proteolytic cleavage produces several HRG fragments which are mostly disulfide-linked and, therefore, not released. On platelet activation, may release a 33 kDa antiangiogenic peptide which encompasses the HRR.

Its subcellular location is the secreted. Functionally, plasma glycoprotein that binds a number of ligands such as heme, heparin, heparan sulfate, thrombospondin, plasminogen, and divalent metal ions. Inhibits rosette formation. Acts as an adapter protein and implicated in regulating many processes such as immune complex and pathogen clearance, cell adhesion, angiogenesis, coagulation and fibrinolysis. Mediates clearance of necrotic cells through enhancing the phagocytosis of necrotic cells in a heparan sulfate-dependent pathway. This process can be regulated by the presence of certain HRG ligands such as heparin and zinc ions. Binds to IgG subclasses of immunoglobins containing kappa and lambda light chains with different affinities regulating their clearance and inhibiting the formation of insoluble immune complexes. Tethers plasminogen to the cell surface. Binds T-cells and alters the cell morphology. Modulates angiogenesis by blocking the CD6-mediated antiangiongenic effect of thrombospondins, THBS1 and THBS2. In Bos taurus (Bovine), this protein is Histidine-rich glycoprotein (HRG).